The sequence spans 105 residues: Probable tetrachloroethene reductive dehalogenase membrane anchor protein (105 aa).

3 helical membrane-spanning segments follow: residues 3-23 (IYDVLIWMALGMTALLIQYGI), 35-55 (IPLQICGFLANFFFIFALAWG), and 66-86 (AIGMGFIFFGGTALIPAIITY).

Belongs to the PceB family.

It is found in the cell membrane. May act as a membrane anchor for the tetrachloroethene reductive dehalogenase PceA. The protein is Probable tetrachloroethene reductive dehalogenase membrane anchor protein of Dehalobacter restrictus (strain DSM 9455 / PER-K23).